The primary structure comprises 1228 residues: Structural maintenance of chromosomes protein 1 (1228 aa).

Residue 32–39 (GPNGAGKS) coordinates ATP. A coiled-coil region spans residues 197 to 510 (NKKRGINAEL…ESKQDAKKRE (314 aa)). In terms of domain architecture, SMC hinge spans 522–635 (VKGRIIDLCT…CDSMTVARDL (114 aa)). 3 coiled-coil regions span residues 710–783 (KLHS…KIFS), 814–926 (EFTK…EIDR), and 984–1068 (VEVD…KRLQ).

The protein belongs to the SMC family. SMC1 subfamily. As to quaternary structure, cohesin complexes are composed of the psm1/smc1 and psm3/smc3 heterodimer attached via their SMC hinge domain, rad21/scc1 which link them, and psc3/scc3, which interacts with rad21.

Its subcellular location is the nucleus. It localises to the chromosome. Functionally, involved in chromosome cohesion during cell cycle and in DNA repair. Central component of cohesin complex. The cohesin complex is required for the cohesion of sister chromatids after DNA replication. The cohesin complex apparently forms a large proteinaceous ring within which sister chromatids can be trapped. At anaphase, the complex is cleaved and dissociates from chromatin, allowing sister chromatids to segregate. This chain is Structural maintenance of chromosomes protein 1 (psm1), found in Schizosaccharomyces pombe (strain 972 / ATCC 24843) (Fission yeast).